Here is a 375-residue protein sequence, read N- to C-terminus: Growth/differentiation factor 8 (375 aa).

The N-terminal stretch at 1 to 18 is a signal peptide; the sequence is MQKLQIFVYIYLFMLTVA. Residues 19 to 266 constitute a propeptide that is removed on maturation; it reads GPVDLNENSE…VTDTPKRARR (248 aa). Residues asparagine 48 and asparagine 71 are each glycosylated (N-linked (GlcNAc...) asparagine). Cystine bridges form between cysteine 272–cysteine 282, cysteine 281–cysteine 340, cysteine 309–cysteine 372, and cysteine 313–cysteine 374.

The protein belongs to the TGF-beta family. As to quaternary structure, homodimer; disulfide-linked. Interacts with WFIKKN2, leading to inhibit its activity. Interacts with FSTL3. Synthesized as large precursor molecule that undergoes proteolytic cleavage to generate an N-terminal propeptide and a disulfide linked C-terminal dimer, which is the biologically active molecule. The circulating form consists of a latent complex of the C-terminal dimer and other proteins, including its propeptide, which maintain the C-terminal dimer in a latent, inactive state. Ligand activation requires additional cleavage of the prodomain by a tolloid-like metalloproteinase.

The protein resides in the secreted. Acts specifically as a negative regulator of skeletal muscle growth. The sequence is that of Growth/differentiation factor 8 (MSTN) from Sylvicapra grimmia (Grey duiker).